A 295-amino-acid chain; its full sequence is Delta-1-pyrroline-5-carboxylate reductase apf3 (295 aa).

This sequence belongs to the pyrroline-5-carboxylate reductase family.

Its pathway is secondary metabolite biosynthesis. Its function is as follows. Delta-1-pyrroline-5-carboxylate reductase; part of the gene cluster that mediates the biosynthesis of the cyclic tetrapeptide apicidin F (APF). The non-ribosomal peptide synthetase apf1 incorporates four different amino acids to produce apicidin F: L-phenylalanine, D-pipecolic acid (D-pip), N-methoxy-L-tryptophan and L-2-aminooctanedioic acid. L-Phenylalanine is the only proteinogenic amino acid directly used by apf1. The 3 other apf1 substrates are non-proteinogenic and have to be modified by other enzymes of the cluster. Lysine is converted to delta-1-pyrroline-5-carboxylate (P5C) which is reduced to L-pipecolic acid (L-pip) by apf3. L-pip is epimerized to D-pip, probably by apf1 activity, prior to incorporation. L-Tryptophan is N-oxidyzed by one of the cytochrome P450 monooxygenases (apf7 or apf8), and further methylated at the hydroxy group by the O-methyltransferase apf6 to yield N-methoxy-L-tryptophan. The synthesis of the fourth apf1 substrate is more complex. The fatty acid synthase apf5 is involved in the synthesis of the octanoic acid backbone of L-2-aminooctanedioic acid by fixing one acetyl-CoA unit and three malonyl-CoA units. Then one of the cytochrome P450 monooxygenases (apf7 or apf8) may oxidize this backbone to 2-oxooctanoic acid. The aminotransferase apf4 is predicted to catalyze the exchange of the keto group with an amino group. The next step would be the oxidation of 2-aminooctanoic acid by one of the cytochrome P450 monooxygenases (apf7 or apf8). The last step is the oxidation of 2-amino-8-hydroxyoctanoic acid to 2-aminooctanedioic acid is catalyzed by the FAD-dependent monooxygenase apf9. The polypeptide is Delta-1-pyrroline-5-carboxylate reductase apf3 (Gibberella fujikuroi (strain CBS 195.34 / IMI 58289 / NRRL A-6831) (Bakanae and foot rot disease fungus)).